Consider the following 308-residue polypeptide: uncharacterized protein (308 aa).

This is an uncharacterized protein from Treponema pallidum (strain Nichols).